We begin with the raw amino-acid sequence, 477 residues long: Glycogen synthase (477 aa).

Lys15 is an ADP-alpha-D-glucose binding site.

The protein belongs to the glycosyltransferase 1 family. Bacterial/plant glycogen synthase subfamily.

It carries out the reaction [(1-&gt;4)-alpha-D-glucosyl](n) + ADP-alpha-D-glucose = [(1-&gt;4)-alpha-D-glucosyl](n+1) + ADP + H(+). The protein operates within glycan biosynthesis; glycogen biosynthesis. Functionally, synthesizes alpha-1,4-glucan chains using ADP-glucose. The polypeptide is Glycogen synthase (Escherichia fergusonii (strain ATCC 35469 / DSM 13698 / CCUG 18766 / IAM 14443 / JCM 21226 / LMG 7866 / NBRC 102419 / NCTC 12128 / CDC 0568-73)).